The sequence spans 382 residues: Alkanesulfonate monooxygenase (382 aa).

Belongs to the SsuD family.

It carries out the reaction an alkanesulfonate + FMNH2 + O2 = an aldehyde + FMN + sulfite + H2O + 2 H(+). Functionally, catalyzes the desulfonation of aliphatic sulfonates. The protein is Alkanesulfonate monooxygenase of Pseudomonas putida (strain GB-1).